We begin with the raw amino-acid sequence, 175 residues long: Disulfide bond formation protein B 2 (175 aa).

Residues 1–9 (MYLARTRFL) are Cytoplasmic-facing. Residues 10-26 (FFLASLACASIIGVAFY) traverse the membrane as a helical segment. Over 27 to 44 (LQQAVGLDPCTLCMVQRA) the chain is Periplasmic. A disulfide bond links cysteine 36 and cysteine 39. Residues 45–61 (AFIACGVLALCAACHAP) traverse the membrane as a helical segment. At 62-68 (GPTGTRR) the chain is on the cytoplasmic side. Residues 69 to 85 (YSLGLLLVALAGLAGAG) form a helical membrane-spanning segment. At 86–142 (TQVWLQTASADQLIPFITRLEQILSLLSLDMCIDRLRSDALFCAEITWTLFGISLPE) the chain is on the periplasmic side. The helical transmembrane segment at 143–161 (WSLLAFTGLALLPLYPLFS) threads the bilayer. Over 162–175 (ELSHWLATRDRGGY) the chain is Cytoplasmic.

It belongs to the DsbB family.

Its subcellular location is the cell inner membrane. Its function is as follows. Required for disulfide bond formation in some periplasmic proteins. Acts by oxidizing the DsbA protein. This chain is Disulfide bond formation protein B 2, found in Pseudomonas syringae pv. syringae (strain B728a).